Here is a 346-residue protein sequence, read N- to C-terminus: tRNA N6-adenosine threonylcarbamoyltransferase (346 aa).

Histidine 111 and histidine 115 together coordinate Fe cation. Substrate is bound by residues 134–138, aspartate 167, glycine 180, and asparagine 277; that span reads LVSGG. Aspartate 305 lines the Fe cation pocket.

The protein belongs to the KAE1 / TsaD family. Fe(2+) is required as a cofactor.

The protein resides in the cytoplasm. It carries out the reaction L-threonylcarbamoyladenylate + adenosine(37) in tRNA = N(6)-L-threonylcarbamoyladenosine(37) in tRNA + AMP + H(+). Functionally, required for the formation of a threonylcarbamoyl group on adenosine at position 37 (t(6)A37) in tRNAs that read codons beginning with adenine. Is involved in the transfer of the threonylcarbamoyl moiety of threonylcarbamoyl-AMP (TC-AMP) to the N6 group of A37, together with TsaE and TsaB. TsaD likely plays a direct catalytic role in this reaction. The protein is tRNA N6-adenosine threonylcarbamoyltransferase of Bordetella bronchiseptica (strain ATCC BAA-588 / NCTC 13252 / RB50) (Alcaligenes bronchisepticus).